The following is a 253-amino-acid chain: Aspartic acid-rich protein (253 aa).

Positions 1–22 (MYLFIYIFFFFFFFFFFVIVQK) are cleaved as a signal peptide. Residues 211–253 (DDFDEEFDDDDDDDDDDDDDDDDDDKDDDLDGDDDGNNDDNDD) are disordered.

This sequence belongs to the nucleosome assembly protein (NAP) family.

This chain is Aspartic acid-rich protein, found in Plasmodium falciparum (isolate fcm17 / Senegal).